The following is a 383-amino-acid chain: Acetylornithine deacetylase (383 aa).

Histidine 80 lines the Zn(2+) pocket. Aspartate 82 is an active-site residue. Position 112 (aspartate 112) interacts with Zn(2+). The active site involves glutamate 144. Zn(2+)-binding residues include glutamate 145, glutamate 169, and histidine 355.

The protein belongs to the peptidase M20A family. ArgE subfamily. Homodimer. Zn(2+) is required as a cofactor. Requires Co(2+) as cofactor. Glutathione serves as cofactor.

Its subcellular location is the cytoplasm. It catalyses the reaction N(2)-acetyl-L-ornithine + H2O = L-ornithine + acetate. The protein operates within amino-acid biosynthesis; L-arginine biosynthesis; L-ornithine from N(2)-acetyl-L-ornithine (linear): step 1/1. Catalyzes the hydrolysis of the amide bond of N(2)-acetylated L-amino acids. Cleaves the acetyl group from N-acetyl-L-ornithine to form L-ornithine, an intermediate in L-arginine biosynthesis pathway, and a branchpoint in the synthesis of polyamines. The chain is Acetylornithine deacetylase from Shigella dysenteriae serotype 1 (strain Sd197).